Consider the following 449-residue polypeptide: MSLDSNPRIFTVSRLNAEVRLLLENEMGIVWLVGEISNLTVPVSGHWYLTLKDSQAQVKCAMFKGNNRRVTFKPQNGKQVLVKARLSLYEPRGDYQLIIESMQPEGDGRLQQEFDQLKMSLAAEGLFAQTAKKTLPEQPKRVGIITSQTGAALFDILHVLKRRDPNLPVVIYPTMVQGSGAAIQIAQAIGRANSRNECDILIVGRGGGSLEDLWCFNEEIVARTIAASEIPIVSAVGHEIDVTIADFVADVRAPTPSAAAELVSRDLSAQLQTVAHQKRRLNSAMERYLSHQQRSLSAYQHRIEKQHPQMQLNNQSQRLDDLNQRLMNHIQQRLQRQQYRVENLTLRLNNLSPTKRISQDKLHIEELKRRLLDSMDRNLLMQRHQLALAAEKLDTVSPLATLMRGYSITHNQDGKVITSTKQVELGDNITTRFADGDITSTVTKASELS.

It belongs to the XseA family. As to quaternary structure, heterooligomer composed of large and small subunits.

Its subcellular location is the cytoplasm. It catalyses the reaction Exonucleolytic cleavage in either 5'- to 3'- or 3'- to 5'-direction to yield nucleoside 5'-phosphates.. Bidirectionally degrades single-stranded DNA into large acid-insoluble oligonucleotides, which are then degraded further into small acid-soluble oligonucleotides. This Aliivibrio fischeri (strain MJ11) (Vibrio fischeri) protein is Exodeoxyribonuclease 7 large subunit.